The following is a 222-amino-acid chain: Ribonuclease S-3 (222 aa).

Positions 1–22 (MFRLQLISAFFILLFSLSPVSA) are cleaved as a signal peptide. A disulfide bridge connects residues cysteine 38 and cysteine 44. A glycan (N-linked (GlcNAc...) asparagine) is linked at asparagine 50. Histidine 54 (proton donor) is an active-site residue. Residues histidine 54, 92–93 (QM), 109–110 (HE), and 113–114 (RH) each bind RNA. 3 disulfides stabilise this stretch: cysteine 68–cysteine 117, cysteine 177–cysteine 210, and cysteine 193–cysteine 204. Glutamate 110 is a catalytic residue. Histidine 114 (proton acceptor) is an active-site residue.

The protein belongs to the RNase T2 family.

It is found in the secreted. The protein resides in the extracellular space. The enzyme catalyses a ribonucleotidyl-ribonucleotide-RNA + H2O = a 3'-end 3'-phospho-ribonucleotide-RNA + a 5'-end dephospho-ribonucleoside-RNA + H(+). Functionally, self-incompatibility (SI) is the inherited ability of a flowering plant to prevent self-fertilization by discriminating between self and non-self pollen during pollination. In many species, self-incompatibility is controlled by the single, multiallelic locus S. This chain is Ribonuclease S-3 (S3), found in Petunia hybrida (Petunia).